Consider the following 352-residue polypeptide: B1 bradykinin receptor (352 aa).

The Extracellular segment spans residues 1–41 (MASWPPLQLQSSNQSQLFPQNATACDNAPEAWDLLHRVLPT). Asn-13 and Asn-21 each carry an N-linked (GlcNAc...) asparagine glycan. The helical transmembrane segment at 42 to 62 (FIISICSFGLLGNLFVLLVFL) threads the bilayer. The Cytoplasmic segment spans residues 63-72 (LPRRRLNVAE). Residues 73–93 (IYLANLAASDLVFVLGLPFWA) traverse the membrane as a helical segment. Topologically, residues 94 to 110 (ENIWNQFNWPFGALLCR) are extracellular. Cysteines 109 and 188 form a disulfide. A helical membrane pass occupies residues 111-131 (VINGIIKANLFISIFLVVAIS). At 132–153 (QDRYCVLVHPMASRRRQRRRQA) the chain is on the cytoplasmic side. Residues 154–174 (RVTCVLIWVVGGLLSIPTFLL) traverse the membrane as a helical segment. Topologically, residues 175-206 (RSIQAVPDLNITACILLLPHEAWHFARIVELN) are extracellular. A glycan (N-linked (GlcNAc...) asparagine) is linked at Asn-184. A helical membrane pass occupies residues 207 to 227 (ILAFLLPLAAIIFFNYHILAS). At 228–250 (LRGREEVSRTRCGGSKDSKTTAL) the chain is on the cytoplasmic side. A helical membrane pass occupies residues 251 to 271 (ILTLVVAFLVCWAPYHFFAFL). The Extracellular portion of the chain corresponds to 272-294 (EFLFQVQAVRGCFWEDFIDLGLQ). The helical transmembrane segment at 295–315 (LANFLAFTNSSLNPVIYVFAG) threads the bilayer. Topologically, residues 316-352 (RLFRTKVWELYKQCTPKSLAPISSSHRKEIFQLFWRN) are cytoplasmic. Cys-329 is lipidated: S-palmitoyl cysteine.

It belongs to the G-protein coupled receptor 1 family. Bradykinin receptor subfamily. BDKRB1 sub-subfamily.

The protein localises to the cell membrane. In terms of biological role, this is a receptor for bradykinin. Could be a factor in chronic pain and inflammation. In Macaca fascicularis (Crab-eating macaque), this protein is B1 bradykinin receptor (BDKRB1).